Consider the following 89-residue polypeptide: Small ribosomal subunit protein uS15 (89 aa).

It belongs to the universal ribosomal protein uS15 family. In terms of assembly, part of the 30S ribosomal subunit. Forms a bridge to the 50S subunit in the 70S ribosome, contacting the 23S rRNA.

In terms of biological role, one of the primary rRNA binding proteins, it binds directly to 16S rRNA where it helps nucleate assembly of the platform of the 30S subunit by binding and bridging several RNA helices of the 16S rRNA. Its function is as follows. Forms an intersubunit bridge (bridge B4) with the 23S rRNA of the 50S subunit in the ribosome. This chain is Small ribosomal subunit protein uS15, found in Methylobacterium sp. (strain 4-46).